We begin with the raw amino-acid sequence, 185 residues long: Ribose 1,5-bisphosphate phosphokinase PhnN (185 aa).

An ATP-binding site is contributed by 10–17 (GPSGSGKD).

This sequence belongs to the ribose 1,5-bisphosphokinase family.

It carries out the reaction alpha-D-ribose 1,5-bisphosphate + ATP = 5-phospho-alpha-D-ribose 1-diphosphate + ADP. The protein operates within metabolic intermediate biosynthesis; 5-phospho-alpha-D-ribose 1-diphosphate biosynthesis; 5-phospho-alpha-D-ribose 1-diphosphate from D-ribose 5-phosphate (route II): step 3/3. Functionally, catalyzes the phosphorylation of ribose 1,5-bisphosphate to 5-phospho-D-ribosyl alpha-1-diphosphate (PRPP). This is Ribose 1,5-bisphosphate phosphokinase PhnN from Pseudomonas paraeruginosa (strain DSM 24068 / PA7) (Pseudomonas aeruginosa (strain PA7)).